The following is a 212-amino-acid chain: V-type ATP synthase subunit E (212 aa).

The protein belongs to the V-ATPase E subunit family.

Its function is as follows. Produces ATP from ADP in the presence of a proton gradient across the membrane. This is V-type ATP synthase subunit E from Nitrosococcus oceani (strain ATCC 19707 / BCRC 17464 / JCM 30415 / NCIMB 11848 / C-107).